A 447-amino-acid polypeptide reads, in one-letter code: MRYLPLTPEDRTEMLARIGAPSVDALFADIPAAKLDPALADLPAHKTELSVERTLGALSAQNVPAGSVPFFVGAGAYRHHVPATVDHLIQRSEFLTSYTPYQPEIAQGTLQYLFEFQTQVGELTGMEVANASMYDGSTAAAEAVLMAHRVTKRRKAVVAGNVHPHYRETIATLSLYADDAVVALSPVPQGGEDILSAIDGETSCVVVQSPDVFGNIVDLKPIAEKAHAAGALLIAVFTEVVSLGLIEPPGAQGADIVVGEGQSIGNPLTFGGPYVGLFATRQKYVRQMPGRLAGETVDASGKRGFVLTLSTREQHIRREKATSNICTNSGLCALAFTIHLTLLGETGLRKLARLNHANACKLADKLAAVPGVQVLNSAFFNEFTLRVPGKAVDVIEKLAAKGVLGGVPYARLAPKAGLDDLILVAATEINTDEDRAAYAAALKEVLA.

Belongs to the GcvP family. N-terminal subunit subfamily. In terms of assembly, the glycine cleavage system is composed of four proteins: P, T, L and H. In this organism, the P 'protein' is a heterodimer of two subunits.

The enzyme catalyses N(6)-[(R)-lipoyl]-L-lysyl-[glycine-cleavage complex H protein] + glycine + H(+) = N(6)-[(R)-S(8)-aminomethyldihydrolipoyl]-L-lysyl-[glycine-cleavage complex H protein] + CO2. In terms of biological role, the glycine cleavage system catalyzes the degradation of glycine. The P protein binds the alpha-amino group of glycine through its pyridoxal phosphate cofactor; CO(2) is released and the remaining methylamine moiety is then transferred to the lipoamide cofactor of the H protein. The protein is Probable glycine dehydrogenase (decarboxylating) subunit 1 of Azorhizobium caulinodans (strain ATCC 43989 / DSM 5975 / JCM 20966 / LMG 6465 / NBRC 14845 / NCIMB 13405 / ORS 571).